Reading from the N-terminus, the 3083-residue chain is Genome polyprotein (3083 aa).

The region spanning 173-313 (IVCVDDVNNL…VLFYSDVEHY (141 aa)) is the Peptidase S30 domain. S267 functions as the For P1 proteinase activity in the catalytic mechanism. An Involved in interaction with stylet and aphid transmission motif is present at residues 365–368 (KLSC). Positions 621 to 623 (PTK) match the Involved in virions binding and aphid transmission motif. The Peptidase C6 domain maps to 647–769 (MYIAKEGYCY…QSEMKHYRVG (123 aa)). Catalysis depends on for helper component proteinase activity residues C655 and H728. One can recognise a Helicase ATP-binding domain in the interval 1239 to 1391 (EIASSSEGEF…TQFAVKVKTE (153 aa)). Residue 1252 to 1259 (GAVGSGKS) participates in ATP binding. The short motif at 1341–1344 (DECH) is the DECH box element. The region spanning 1410–1569 (DMVQHGNNIL…GLSVTTHGVS (160 aa)) is the Helicase C-terminal domain. Residues 1894 to 1903 (KRGKVKGNNS) carry the Nuclear localization signal motif. Position 1918 is an O-(5'-phospho-RNA)-tyrosine (Y1918). In terms of domain architecture, Peptidase C4 spans 2045-2263 (SKSIYKGVRD…IAWGSLNLVD (219 aa)). Active-site for nuclear inclusion protein A activity residues include H2090, D2125, and C2195. The RdRp catalytic domain maps to 2529–2653 (WLYCHADGSQ…AVKDEDSGLL (125 aa)). The interval 2808-2855 (QTREAGAGASKKDKDEDKDKKKDVASSSASEKAVATATKDKDVNAGSH) is disordered. The span at 2817–2831 (SKKDKDEDKDKKKDV) shows a compositional bias: basic and acidic residues. Low complexity predominate over residues 2832–2844 (ASSSASEKAVATA). A Phosphothreonine modification is found at T3065.

The protein belongs to the potyviridae genome polyprotein family. In terms of assembly, interacts with host eIF4E protein (via cap-binding region); this interaction mediates the translation of the VPg-viral RNA conjugates. Part of a complex that comprises VPg, RNA, host EIF4E and EIF4G; this interaction mediates the translation of the VPg-viral RNA conjugates. Post-translationally, VPg is uridylylated by the polymerase and is covalently attached to the 5'-end of the genomic RNA. This uridylylated form acts as a nucleotide-peptide primer for the polymerase. In terms of processing, potyviral RNA is expressed as two polyproteins which undergo post-translational proteolytic processing. Genome polyprotein is processed by NIa-pro, P1 and HC-pro proteinases resulting in the production of at least ten individual proteins. P3N-PIPO polyprotein is cleaved by P1 and HC-pro proteinases resulting in the production of three individual proteins. The P1 proteinase and the HC-pro cleave only their respective C-termini autocatalytically. 6K1 is essential for proper proteolytic separation of P3 from CI.

It is found in the host cytoplasmic vesicle. It localises to the host nucleus. The protein resides in the virion. The enzyme catalyses RNA(n) + a ribonucleoside 5'-triphosphate = RNA(n+1) + diphosphate. The catalysed reaction is Hydrolyzes glutaminyl bonds, and activity is further restricted by preferences for the amino acids in P6 - P1' that vary with the species of potyvirus, e.g. Glu-Xaa-Xaa-Tyr-Xaa-Gln-|-(Ser or Gly) for the enzyme from tobacco etch virus. The natural substrate is the viral polyprotein, but other proteins and oligopeptides containing the appropriate consensus sequence are also cleaved.. It catalyses the reaction Hydrolyzes a Gly-|-Gly bond at its own C-terminus, commonly in the sequence -Tyr-Xaa-Val-Gly-|-Gly, in the processing of the potyviral polyprotein.. Its function is as follows. Required for aphid transmission and also has proteolytic activity. Only cleaves a Gly-Gly dipeptide at its own C-terminus. Interacts with virions and aphid stylets. Acts as a suppressor of RNA-mediated gene silencing, also known as post-transcriptional gene silencing (PTGS), a mechanism of plant viral defense that limits the accumulation of viral RNAs. May have RNA-binding activity. Functionally, has helicase activity. It may be involved in replication. In terms of biological role, indispensable for virus replication. Reduces the abundance of host transcripts related to jasmonic acid biosynthesis therefore altering the host defenses. In order to increase its own stability, decreases host protein degradation pathways. Indispensable for virus replication. Its function is as follows. Mediates the cap-independent, EIF4E-dependent translation of viral genomic RNAs. Binds to the cap-binding site of host EIF4E and thus interferes with the host EIF4E-dependent mRNA export and translation. VPg-RNA directly binds EIF4E and is a template for transcription. Also forms trimeric complexes with EIF4E-EIF4G, which are templates for translation. Functionally, has RNA-binding and proteolytic activities. In terms of biological role, an RNA-dependent RNA polymerase that plays an essential role in the virus replication. Involved in aphid transmission, cell-to-cell and systemis movement, encapsidation of the viral RNA and in the regulation of viral RNA amplification. In Zucchini yellow mosaic virus (strain Singapore) (ZYMV), this protein is Genome polyprotein.